The following is a 500-amino-acid chain: Lysine--tRNA ligase (500 aa).

Mg(2+)-binding residues include aspartate 412 and glutamate 419.

Belongs to the class-II aminoacyl-tRNA synthetase family. In terms of assembly, homodimer. It depends on Mg(2+) as a cofactor.

The protein resides in the cytoplasm. It catalyses the reaction tRNA(Lys) + L-lysine + ATP = L-lysyl-tRNA(Lys) + AMP + diphosphate. This chain is Lysine--tRNA ligase, found in Kineococcus radiotolerans (strain ATCC BAA-149 / DSM 14245 / SRS30216).